The primary structure comprises 168 residues: Cilia- and flagella-associated protein HOATZ (168 aa).

Positions 142–168 are disordered; that stretch reads PKDKVPKSKEVLSESGLRDQEEVKALE.

It belongs to the HOATZ family. In terms of tissue distribution, specifically expressed in tissues with motile cilia and flagella, such as brain ependyma, lung, testis, and oviduct but not in whole brain, liver,kidney, spleen, and eyeball.

The protein localises to the cytoplasm. It localises to the cell projection. The protein resides in the cilium. Functionally, required for motile ciliogenesis and flagellar genesis by mediating the maturation of the glycolytic enzyme ENO4. The chain is Cilia- and flagella-associated protein HOATZ from Mus musculus (Mouse).